We begin with the raw amino-acid sequence, 165 residues long: Transcriptional repressor NrdR (165 aa).

Residues 3–34 (CPFCGAQDTRVVDSRLSHEGDQVRRRRECGEC) fold into a zinc finger. The ATP-cone domain occupies 49–139 (PRVVKSDGSR…VYRRFEDVNQ (91 aa)).

The protein belongs to the NrdR family. Requires Zn(2+) as cofactor.

In terms of biological role, negatively regulates transcription of bacterial ribonucleotide reductase nrd genes and operons by binding to NrdR-boxes. This chain is Transcriptional repressor NrdR, found in Methylococcus capsulatus (strain ATCC 33009 / NCIMB 11132 / Bath).